Consider the following 426-residue polypeptide: Putative two-component response regulator ARR20 (426 aa).

The Response regulatory domain maps to 40–155 (SNRVLLVGAD…VIAVLWRHVY (116 aa)). D91 is subject to 4-aspartylphosphate. The segment at 161–216 (KSGLDKPGESGTVESDPDEYDDLEQDNLYESNEEGSKNTCDHKEEKSPTKKPRMQW) is disordered. The span at 175 to 193 (SDPDEYDDLEQDNLYESNE) shows a compositional bias: acidic residues. Positions 194–208 (EGSKNTCDHKEEKSP) are enriched in basic and acidic residues. Residues 210–213 (KKPR) carry the Nuclear localization signal motif. The segment at residues 213 to 268 (RMQWTPELHHKFEVAVEKMGSLEKAFPKTILKYMQEELNVQGLTRNNVASHLQKYR) is a DNA-binding region (myb-like GARP).

It belongs to the ARR family. Type-B subfamily. In terms of assembly, binds the target DNA as a monomer. In terms of processing, two-component system major event consists of a His-to-Asp phosphorelay between a sensor histidine kinase (HK) and a response regulator (RR). In plants, the His-to-Asp phosphorelay involves an additional intermediate named Histidine-containing phosphotransfer protein (HPt). This multistep phosphorelay consists of a His-Asp-His-Asp sequential transfer of a phosphate group between first a His and an Asp of the HK protein, followed by the transfer to a conserved His of the HPt protein and finally the transfer to an Asp in the receiver domain of the RR protein. In terms of tissue distribution, predominantly expressed in mature pistil tip. Also detected in the shoot apical meristem as well as vascular tissue and hydathodes of the leaves.

Its subcellular location is the nucleus. In terms of biological role, putative transcriptional activator that binds specifically to the DNA sequence 5'-[AG]GATT-3'. Functions as a response regulator involved in His-to-Asp phosphorelay signal transduction system. Phosphorylation of the Asp residue in the receiver domain activates the ability of the protein to promote the transcription of target genes. Could directly activate some type-A response regulators in response to cytokinins. This is Putative two-component response regulator ARR20 (ARR20) from Arabidopsis thaliana (Mouse-ear cress).